The primary structure comprises 142 residues: Small ribosomal subunit protein uS19 (142 aa).

This sequence belongs to the universal ribosomal protein uS19 family. Component of the small ribosomal subunit. Mature ribosomes consist of a small (40S) and a large (60S) subunit. The 40S subunit contains about 32 different proteins and 1 molecule of RNA (18S). The 60S subunit contains 45 different proteins and 3 molecules of RNA (25S, 5.8S and 5S).

It is found in the cytoplasm. In terms of biological role, component of the ribosome, a large ribonucleoprotein complex responsible for the synthesis of proteins in the cell. The small ribosomal subunit (SSU) binds messenger RNAs (mRNAs) and translates the encoded message by selecting cognate aminoacyl-transfer RNA (tRNA) molecules. The large subunit (LSU) contains the ribosomal catalytic site termed the peptidyl transferase center (PTC), which catalyzes the formation of peptide bonds, thereby polymerizing the amino acids delivered by tRNAs into a polypeptide chain. The nascent polypeptides leave the ribosome through a tunnel in the LSU and interact with protein factors that function in enzymatic processing, targeting, and the membrane insertion of nascent chains at the exit of the ribosomal tunnel. RPS15 has a role in the late stage of the assembly of pre-40S particles within the nucleus and controls their export to the cytoplasm. This is Small ribosomal subunit protein uS19 (RPS15) from Candida albicans (strain SC5314 / ATCC MYA-2876) (Yeast).